A 168-amino-acid chain; its full sequence is Photosystem I assembly protein Ycf3 (168 aa).

TPR repeat units follow at residues 35–68, 72–105, and 120–153; these read AFTYYRDGMSAQSEGNYAEALQNYYEAMRLEIDP, SYILYNIGLIHTSNGEHMKALEYYFRALERNPFL, and GEKAIQQGDSEIAEAWFDQAAEYWKQALALTPGN.

The protein belongs to the Ycf3 family.

The protein resides in the plastid membrane. In terms of biological role, essential for the assembly of the photosystem I (PSI) complex. May act as a chaperone-like factor to guide the assembly of the PSI subunits. This Cuscuta exaltata (Tall dodder) protein is Photosystem I assembly protein Ycf3.